The primary structure comprises 394 residues: Gastricsin (394 aa).

A signal peptide spans 1 to 16; the sequence is MKWMVVVLLCLPLLEA. The propeptide at 17 to 65 is activation peptide; the sequence is TQIKVPLKKIKSIREVLREKGLLGDFLKNHKPQHARKFFRNRLAKTGDF. A Peptidase A1 domain is found at 79–391; it reads YFGQISLGTP…DLANNRVGFA (313 aa). The active site involves Asp97. 2 disulfides stabilise this stretch: Cys110–Cys115 and Cys273–Cys277. Thr283 is a catalytic residue. Cys316 and Cys349 are joined by a disulfide.

The protein belongs to the peptidase A1 family.

The protein resides in the secreted. The catalysed reaction is More restricted specificity than pepsin A, but shows preferential cleavage at Tyr-|-Xaa bonds. High activity on hemoglobin.. Functionally, hydrolyzes a variety of proteins. This is Gastricsin (PGC) from Cavia porcellus (Guinea pig).